The following is a 238-amino-acid chain: NAD(P)H-hydrate epimerase (238 aa).

The YjeF N-terminal domain occupies 11–217; it reads AAALDKDLMS…EIHQKYNLQL (207 aa). Residue 61-65 coordinates (6S)-NADPHX; it reads NNGGD. K(+)-binding residues include N62 and D123. (6S)-NADPHX is bound by residues 127–133 and D156; that span reads GFSFTGS. A K(+)-binding site is contributed by S159.

It belongs to the NnrE/AIBP family. It depends on K(+) as a cofactor.

It is found in the cytoplasm. Its subcellular location is the mitochondrion. It carries out the reaction (6R)-NADHX = (6S)-NADHX. The catalysed reaction is (6R)-NADPHX = (6S)-NADPHX. Catalyzes the epimerization of the S- and R-forms of NAD(P)HX, a damaged form of NAD(P)H that is a result of enzymatic or heat-dependent hydration. This is a prerequisite for the S-specific NAD(P)H-hydrate dehydratase to allow the repair of both epimers of NAD(P)HX. The protein is NAD(P)H-hydrate epimerase of Sclerotinia sclerotiorum (strain ATCC 18683 / 1980 / Ss-1) (White mold).